Here is a 319-residue protein sequence, read N- to C-terminus: HPr kinase/phosphorylase (319 aa).

Active-site residues include histidine 141 and lysine 162. 156 to 163 (GNSGVGKS) provides a ligand contact to ATP. Serine 163 lines the Mg(2+) pocket. Catalysis depends on aspartate 180, which acts as the Proton acceptor; for phosphorylation activity. Proton donor; for dephosphorylation activity. The interval 204–213 (MEIRGIGIID) is important for the catalytic mechanism of both phosphorylation and dephosphorylation. A Mg(2+)-binding site is contributed by glutamate 205. Arginine 246 is a catalytic residue. The tract at residues 267–272 (PVKVGR) is important for the catalytic mechanism of dephosphorylation.

The protein belongs to the HPrK/P family. As to quaternary structure, homohexamer. The cofactor is Mg(2+).

It catalyses the reaction [HPr protein]-L-serine + ATP = [HPr protein]-O-phospho-L-serine + ADP + H(+). The catalysed reaction is [HPr protein]-O-phospho-L-serine + phosphate + H(+) = [HPr protein]-L-serine + diphosphate. In terms of biological role, catalyzes the ATP- as well as the pyrophosphate-dependent phosphorylation of a specific serine residue in HPr, a phosphocarrier protein of the phosphoenolpyruvate-dependent sugar phosphotransferase system (PTS). HprK/P also catalyzes the pyrophosphate-producing, inorganic phosphate-dependent dephosphorylation (phosphorolysis) of seryl-phosphorylated HPr (P-Ser-HPr). The two antagonistic activities of HprK/P are regulated by several intracellular metabolites, which change their concentration in response to the absence or presence of rapidly metabolisable carbon sources (glucose, fructose, etc.) in the growth medium. Therefore, by controlling the phosphorylation state of HPr, HPrK/P is a sensor enzyme that plays a major role in the regulation of carbon metabolism and sugar transport: it mediates carbon catabolite repression (CCR), and regulates PTS-catalyzed carbohydrate uptake and inducer exclusion. This Lactobacillus johnsonii (strain CNCM I-12250 / La1 / NCC 533) protein is HPr kinase/phosphorylase.